The primary structure comprises 206 residues: Geminin (206 aa).

Residues 1–18 (MNLSMKQKQEGAQENVKN) are compositionally biased toward polar residues. Residues 1–42 (MNLSMKQKQEGAQENVKNSPVPRRTLKMIQPSADGSLVGREN) are disordered. Lys27 is subject to N6-acetyllysine. Ser36, Ser63, and Ser64 each carry phosphoserine. Residues 79–158 (TQEAFDLISK…AEVIERLSNE (80 aa)) are necessary and sufficient for interaction with IDAS and CDT1. Positions 91–141 (PSSQYWKEVAEQRRKALYEALKENEKLHKEIEQKDSEIARLRKENKDLAEV) form a coiled coil. Residues 157–206 (NEPLDNFESPDSQEFDSEEEAVEYSELEDSGAGTCAEETVSSSTDARPCT) are disordered. The span at 167-185 (DSQEFDSEEEAVEYSELED) shows a compositional bias: acidic residues. Positions 167–187 (DSQEFDSEEEAVEYSELEDSG) are homeodomain binding. Residue Ser181 is modified to Phosphoserine; by CK2. Positions 195–206 (TVSSSTDARPCT) are enriched in polar residues.

This sequence belongs to the geminin family. In terms of assembly, homotetramer. Interacts with CDT1; this inhibits binding of the MCM complex to origins of replication. The complex with CDT1 exists in two forms, a 'permissive' heterotrimer and an 'inhibitory' heterohexamer. Interacts (via coiled-coil domain) with IDAS (via coiled-coil domain); this targets GMNN to the nucleus. The heterodimer formed by GMNN and MCIDAS has much lower affinity for CDT1 than the GMNN homodimer. Interacts with a subset of Hox proteins, affinity increasing from anterior to posterior types, the strongest interaction being with HOXB1, HOXC9 and HOXD10. Interacts with LRWD1 from G1/S to mitosis. Phosphorylated during mitosis. Phosphorylation at Ser-181 by CK2 results in enhanced binding to Hox proteins and more potent inhibitory effect on Hox transcriptional activity.

The protein resides in the cytoplasm. It localises to the nucleus. Inhibits DNA replication by preventing the incorporation of MCM complex into pre-replication complex (pre-RC). It is degraded during the mitotic phase of the cell cycle. Its destruction at the metaphase-anaphase transition permits replication in the succeeding cell cycle. Inhibits histone acetyltransferase activity of KAT7/HBO1 in a CDT1-dependent manner, inhibiting histone H4 acetylation and DNA replication licensing. Inhibits the transcriptional activity of a subset of Hox proteins, enrolling them in cell proliferative control. The sequence is that of Geminin (Gmnn) from Mus musculus (Mouse).